The chain runs to 454 residues: Tubulin beta-3 chain (454 aa).

Residues Gln11, Glu75, Ser144, Gly148, Thr149, Gly150, Asn210, and Asn232 each contribute to the GTP site. Mg(2+) is bound at residue Glu75. The tract at residues 435 to 454 (TADDEFDPEVNQEEVEGDCI) is disordered.

Belongs to the tubulin family. In terms of assembly, dimer of alpha and beta chains. A typical microtubule is a hollow water-filled tube with an outer diameter of 25 nm and an inner diameter of 15 nM. Alpha-beta heterodimers associate head-to-tail to form protofilaments running lengthwise along the microtubule wall with the beta-tubulin subunit facing the microtubule plus end conferring a structural polarity. Microtubules usually have 13 protofilaments but different protofilament numbers can be found in some organisms and specialized cells. It depends on Mg(2+) as a cofactor.

The protein resides in the cytoplasm. The protein localises to the cytoskeleton. In terms of biological role, tubulin is the major constituent of microtubules, a cylinder consisting of laterally associated linear protofilaments composed of alpha- and beta-tubulin heterodimers. Microtubules grow by the addition of GTP-tubulin dimers to the microtubule end, where a stabilizing cap forms. Below the cap, tubulin dimers are in GDP-bound state, owing to GTPase activity of alpha-tubulin. This is Tubulin beta-3 chain (betaTub60D) from Drosophila melanogaster (Fruit fly).